A 460-amino-acid polypeptide reads, in one-letter code: MTESTAKVQVIGGGLAGTEAAWQVAQAGIPVILHEMRPIRTSPAHHSQELAELVCSNSFGAMSSNRAAGLLHEELRRLNSIIIQTADKHAVPAGGALAVDRGVFSHQLTQTLQNHPLIELRRSEVQEIPSDGIVILATGPLTSPVLAEKLQQFTGMAYMSFFDAASPIIVGDSINRDIAFLASRYDKGEAAYLNCPLNPEQYLQFRDELCTAEQAELKEFERETAKFFEGCLPIEELAQRGEDTMRYGPLKPVGLFDARLGDFRDPENKEKRPYAVVQLRQEDKQGKLWNMVGFQTNLKWGEQKRVFRLIPGLENAEFVRMGVMHRNTFINSPQLLDPTLQFKSRPTLLAAGQLIGTEGYTAASAGGWLAGTNAARIALGLEPISLPSTTMMGALFEFISSASPKHFQPMPPNFGILPDLPVRIRNKRERYGKYRDRALADLNDCQTQLNNHQKNSVILV.

Gly12 to Gly17 provides a ligand contact to FAD.

It belongs to the MnmG family. TrmFO subfamily. FAD serves as cofactor.

The protein localises to the cytoplasm. It carries out the reaction uridine(54) in tRNA + (6R)-5,10-methylene-5,6,7,8-tetrahydrofolate + NADH + H(+) = 5-methyluridine(54) in tRNA + (6S)-5,6,7,8-tetrahydrofolate + NAD(+). The catalysed reaction is uridine(54) in tRNA + (6R)-5,10-methylene-5,6,7,8-tetrahydrofolate + NADPH + H(+) = 5-methyluridine(54) in tRNA + (6S)-5,6,7,8-tetrahydrofolate + NADP(+). In terms of biological role, catalyzes the folate-dependent formation of 5-methyl-uridine at position 54 (M-5-U54) in all tRNAs. This Crocosphaera subtropica (strain ATCC 51142 / BH68) (Cyanothece sp. (strain ATCC 51142)) protein is Methylenetetrahydrofolate--tRNA-(uracil-5-)-methyltransferase TrmFO.